The primary structure comprises 293 residues: Exosome complex component RRP4 (293 aa).

The S1 motif domain maps to 79 to 159 (EVGDIVVGRI…SDGAVSLHTR (81 aa)). At serine 124 the chain carries Phosphoserine.

It belongs to the RRP4 family. Component of the RNA exosome core complex (Exo-9), composed of EXOSC1, EXOSC2, EXOSC3, EXOSC4, EXOSC5, EXOSC6, EXOSC7, EXOSC8 and EXOSC9; within the complex interacts with EXOSC4 and EXOSC7. The catalytically inactive RNA exosome core complex (Exo-9) associates with the catalytic subunit EXOSC10/RRP6. Exo-9 may associate with DIS3 to form the nucleolar exosome complex, or DIS3L to form the cytoplasmic exosome complex. Exo-9 is formed by a hexameric base ring consisting of the heterodimers EXOSC4-EXOSC9, EXOSC5-EXOSC8 and EXOSC6-EXOSC7, and a cap ring consisting of EXOSC1, EXOSC2 and EXOSC3. The RNA exosome complex associates with cofactors C1D/RRP47, MPHOSPH6/MPP6 and MTREX/MTR4. Interacts with GTPBP1. Interacts with ZFP36L1 (via N-terminus).

The protein resides in the cytoplasm. The protein localises to the nucleus. It is found in the nucleolus. Its function is as follows. Non-catalytic component of the RNA exosome complex which has 3'-&gt;5' exoribonuclease activity and participates in a multitude of cellular RNA processing and degradation events. In the nucleus, the RNA exosome complex is involved in proper maturation of stable RNA species such as rRNA, snRNA and snoRNA, in the elimination of RNA processing by-products and non-coding 'pervasive' transcripts, such as antisense RNA species and promoter-upstream transcripts (PROMPTs), and of mRNAs with processing defects, thereby limiting or excluding their export to the cytoplasm. The RNA exosome may be involved in Ig class switch recombination (CSR) and/or Ig variable region somatic hypermutation (SHM) by targeting AICDA deamination activity to transcribed dsDNA substrates. In the cytoplasm, the RNA exosome complex is involved in general mRNA turnover and specifically degrades inherently unstable mRNAs containing AU-rich elements (AREs) within their 3' untranslated regions, and in RNA surveillance pathways, preventing translation of aberrant mRNAs. It seems to be involved in degradation of histone mRNA. The catalytic inactive RNA exosome core complex of 9 subunits (Exo-9) is proposed to play a pivotal role in the binding and presentation of RNA for ribonucleolysis, and to serve as a scaffold for the association with catalytic subunits and accessory proteins or complexes. EXOSC2 as peripheral part of the Exo-9 complex stabilizes the hexameric ring of RNase PH-domain subunits through contacts with EXOSC4 and EXOSC7. The sequence is that of Exosome complex component RRP4 from Homo sapiens (Human).